The chain runs to 100 residues: Putative pterin-4-alpha-carbinolamine dehydratase 2 (100 aa).

This sequence belongs to the pterin-4-alpha-carbinolamine dehydratase family.

The catalysed reaction is (4aS,6R)-4a-hydroxy-L-erythro-5,6,7,8-tetrahydrobiopterin = (6R)-L-erythro-6,7-dihydrobiopterin + H2O. The sequence is that of Putative pterin-4-alpha-carbinolamine dehydratase 2 from Cupriavidus pinatubonensis (strain JMP 134 / LMG 1197) (Cupriavidus necator (strain JMP 134)).